Reading from the N-terminus, the 1454-residue chain is Probable cleavage and polyadenylation specificity factor subunit 1 (1454 aa).

The disordered stretch occupies residues 810–843 (EEKEKKAKQTAAQEKEKETEKKKDDAKNEEDQVN). Positions 812 to 843 (KEKKAKQTAAQEKEKETEKKKDDAKNEEDQVN) are enriched in basic and acidic residues.

This sequence belongs to the CPSF1 family. As to quaternary structure, CPSF is a heterotetramer composed of four distinct subunits 160 (cpsf-1), 100 (cpsf-2), 70 (cpsf-3), and 30 kDa (cpsf-4).

Its subcellular location is the nucleus. CPSF plays a key role in pre-mRNA 3'-end formation, recognizing the AAUAAA signal sequence and interacting with poly(A)polymerase and other factors to bring about cleavage and poly(A) addition. This subunit is involved in the RNA recognition step of the polyadenylation reaction. The sequence is that of Probable cleavage and polyadenylation specificity factor subunit 1 from Caenorhabditis briggsae.